Consider the following 330-residue polypeptide: Methionyl-tRNA formyltransferase (330 aa).

Residue 121 to 124 (SLLP) participates in (6S)-5,6,7,8-tetrahydrofolate binding.

This sequence belongs to the Fmt family.

It catalyses the reaction L-methionyl-tRNA(fMet) + (6R)-10-formyltetrahydrofolate = N-formyl-L-methionyl-tRNA(fMet) + (6S)-5,6,7,8-tetrahydrofolate + H(+). In terms of biological role, attaches a formyl group to the free amino group of methionyl-tRNA(fMet). The formyl group appears to play a dual role in the initiator identity of N-formylmethionyl-tRNA by promoting its recognition by IF2 and preventing the misappropriation of this tRNA by the elongation apparatus. The chain is Methionyl-tRNA formyltransferase from Burkholderia cenocepacia (strain HI2424).